A 529-amino-acid chain; its full sequence is DEP domain-containing protein 1B (529 aa).

One can recognise a DEP domain in the interval 24–108 (FRARMPLRRH…DNRHLYRFPP (85 aa)). S160 carries the phosphoserine modification. The Rho-GAP domain maps to 201-393 (DSLEEVLNTK…FLMDNYQEIL (193 aa)). S436 is subject to Phosphoserine.

The polypeptide is DEP domain-containing protein 1B (Depdc1b) (Mus musculus (Mouse)).